Here is a 471-residue protein sequence, read N- to C-terminus: Ubiquitin-conjugating enzyme E2 variant 3 (471 aa).

In terms of domain architecture, UEV spans 2 to 145; sequence EFDCEGLRRL…QEELPMYSLS (144 aa). NAD(+) is bound at residue 191–219; sequence GELGIACTLAISAKGIADRLVLLDLSEGT.

The protein in the N-terminal section; belongs to the ubiquitin-conjugating enzyme family. UEV subfamily. It in the C-terminal section; belongs to the LDH/MDH superfamily. In terms of assembly, homodimer. Colon, colon carcinoma cell lines, normal cervical epithelium, carcinomas of the uterine cervix and peripheral blood leukocytes.

Its function is as follows. Possible negative regulator of polyubiquitination. The protein is Ubiquitin-conjugating enzyme E2 variant 3 of Homo sapiens (Human).